A 496-amino-acid chain; its full sequence is Cytochrome P450 71B14 (496 aa).

The helical transmembrane segment at 1–21 (MIWWFIVGASFFFAFILIAKD) threads the bilayer. Residue Cys-436 coordinates heme.

It belongs to the cytochrome P450 family. Heme serves as cofactor.

The protein localises to the membrane. In Arabidopsis thaliana (Mouse-ear cress), this protein is Cytochrome P450 71B14 (CYP71B14).